Consider the following 1680-residue polypeptide: GRIP and coiled-coil domain-containing protein 2 (1680 aa).

Met-1 is modified (N-acetylmethionine). The span at 1–14 (MEDSAPDAVAAAPS) shows a compositional bias: low complexity. Disordered regions lie at residues 1–23 (MEDS…KLET) and 1468–1522 (KSEP…SSAG). A coiled-coil region spans residues 31-1614 (KFAKKQMMLL…REKSVANLEY (1584 aa)). A compositionally biased stretch (polar residues) spans 1469 to 1484 (SEPSTRSPASSHQPSK). A phosphoserine mark is found at Ser-1475 and Ser-1479. A mediates interaction with RAB6A region spans residues 1570–1609 (HLNGLLRETEATNAILMEQIKLLKSEIRRLERNQEREKSV). The interval 1570-1680 (HLNGLLRETE…SYLHSWSGLR (111 aa)) is mediates interaction with RAB9A. The 51-residue stretch at 1605-1655 (REKSVANLEYLKNVLLRFIFLKPGSERERLLPVIDTMLQLSPEEKGKLATV) folds into the GRIP domain.

Homodimer. Interacts (via GRIP domain) with RAB6A (preferentially in its GTP-bound form). May interact (RAB6A-dependent) with ARL1; might be involved in GCC2 Golgi localization. Interacts (probably via GRIP domain) with RAB9A (preferentially in its GTP-bound form). Interacts with CLASP1 and CLASP2; recruits both proteins to membranes of the TGN. Interacts with STX16.

It localises to the cytoplasm. It is found in the golgi apparatus. The protein localises to the trans-Golgi network membrane. Golgin which probably tethers transport vesicles to the trans-Golgi network (TGN) and regulates vesicular transport between the endosomes and the Golgi. As a RAB9A effector it is involved in recycling of the mannose 6-phosphate receptor from the late endosomes to the TGN. May also play a role in transport between the recycling endosomes and the Golgi. Required for maintenance of the Golgi structure, it is involved in the biogenesis of noncentrosomal, Golgi-associated microtubules through recruitment of CLASP1 and CLASP2. In Mus musculus (Mouse), this protein is GRIP and coiled-coil domain-containing protein 2 (Gcc2).